The primary structure comprises 508 residues: Lysine--tRNA ligase (508 aa).

Residues E418 and E425 each coordinate Mg(2+).

This sequence belongs to the class-II aminoacyl-tRNA synthetase family. In terms of assembly, homodimer. It depends on Mg(2+) as a cofactor.

The protein localises to the cytoplasm. The enzyme catalyses tRNA(Lys) + L-lysine + ATP = L-lysyl-tRNA(Lys) + AMP + diphosphate. The chain is Lysine--tRNA ligase from Burkholderia pseudomallei (strain K96243).